Reading from the N-terminus, the 485-residue chain is Pre-glycoprotein polyprotein GP complex (485 aa).

Glycine 2 carries the N-myristoyl glycine; by host lipid modification. At 2–17 (GQLISFFGEIPTILQE) the chain is on the extracellular side. Residues 18–33 (ALNIALIAVSIIATIK) form a helical membrane-spanning segment. The Cytoplasmic portion of the chain corresponds to 34–58 (GVVNVWKSGLIQLLMFVMLAGRSCS). Cysteine 57 provides a ligand contact to Zn(2+). The Extracellular segment spans residues 59–424 (VQIGHHLELE…QGRTPLSLVD (366 aa)). 4 cysteine pairs are disulfide-bonded: cysteine 85–cysteine 225, cysteine 271–cysteine 284, cysteine 293–cysteine 302, and cysteine 356–cysteine 377. N-linked (GlcNAc...) asparagine; by host glycosylation is found at asparagine 88, asparagine 128, asparagine 179, and asparagine 218. Residues asparagine 357, asparagine 365, asparagine 382, and asparagine 387 are each glycosylated (N-linked (GlcNAc...) asparagine; by host). The helical transmembrane segment at 425–445 (VCFWSTLFYTASIFLHLIRIP) threads the bilayer. Residues 446-485 (THRHIVGEGCPKPHRLRADSTCACGLYKQKRRPLKWVRSN) are Cytoplasmic-facing. Positions 447, 449, 455, 459, 467, and 469 each coordinate Zn(2+).

The protein belongs to the arenaviridae GPC protein family. Interacts with glycoprotein G2. Part of the GP complex (GP-C) together with glycoprotein G1 and glycoprotein G2. The GP-complex interacts with protein Z, which interacts with ribonucleocapsid; these interactions may induce virion budding. In terms of assembly, homotrimer; disulfide-linked. In pre-fusion state, G1 homotrimers bind G2 homotrimers via ionic interactions. Part of the GP complex (GP-C) together with glycoprotein G2 and the stable signal peptide. The GP-complex interacts with protein Z, which interacts with ribonucleocapsid; these interactions may induce virion budding. As to quaternary structure, homotrimer. Interacts with the stable signal peptide. In pre-fusion state, G2 homotrimers bind G1 homotrimers via ionic interactions. Part of the GP complex (GP-C) together with glycoprotein G1 and the stable signal peptide. Acidification in the endosome triggers rearrangements, which ultimately leads to a 6 helix bundle formed by the two heptad repeat domains (HR1 and HR2) in post-fusion state. The GP-complex interacts with protein Z, which interacts with ribonucleocapsid; these interactions may induce virion budding. Post-translationally, specific enzymatic cleavages in vivo yield mature proteins. GP-C polyprotein is cleaved in the endoplasmic reticulum by the host protease MBTPS1. Only cleaved glycoprotein is incorporated into virions. In terms of processing, the SSP remains stably associated with the GP complex following cleavage by signal peptidase and plays crucial roles in the trafficking of GP through the secretory pathway. Myristoylation is necessary for GP2-mediated fusion activity.

The protein resides in the virion membrane. It localises to the host endoplasmic reticulum membrane. The protein localises to the host Golgi apparatus membrane. It is found in the host cell membrane. In terms of biological role, functions as a cleaved signal peptide that is retained as the third component of the GP complex (GP-C). Helps to stabilize the spike complex in its native conformation. The SSP is required for efficient glycoprotein expression, post-translational maturation cleavage of G1 and G2, glycoprotein transport to the cell surface plasma membrane, formation of infectious virus particles, and acid pH-dependent glycoprotein-mediated cell fusion. Forms the virion spikes together with glycoprotein G2. The glycoprotein spike trimers are connected to the underlying matrix. Interacts with the host receptor leading to virus endocytosis. Functionally, forms the virion spikes together with glycoprotein G1. The glycoprotein spike trimers are connected to the underlying matrix. Class I viral fusion protein that directs fusion of viral and host endosomal membranes, leading to delivery of the nucleocapsid into the cytoplasm. Membrane fusion is mediated by irreversible conformational changes induced by acidification. This is Pre-glycoprotein polyprotein GP complex from Sigmodon hispidus (Hispid cotton rat).